The following is a 544-amino-acid chain: Cytochrome P450 82A1 (544 aa).

C481 contributes to the heme binding site.

This sequence belongs to the cytochrome P450 family. It depends on heme as a cofactor.

It localises to the membrane. The protein is Cytochrome P450 82A1 (CYP82A1) of Pisum sativum (Garden pea).